The following is a 40-amino-acid chain: Potassium channel toxin alpha-KTx 12.2 (40 aa).

Cystine bridges form between C2–C5, C10–C31, C16–C36, and C20–C38.

The protein belongs to the short scorpion toxin superfamily. Potassium channel inhibitor family. Alpha-KTx 12 subfamily. As to expression, expressed by the venom gland.

It is found in the secreted. Its function is as follows. Inhibits high conductance calcium-activated potassium channels. Reversibly inhibits Shaker B potassium channels. This chain is Potassium channel toxin alpha-KTx 12.2, found in Tityus trivittatus (Argentinean scorpion).